Here is a 634-residue protein sequence, read N- to C-terminus: Chaperone protein HtpG (634 aa).

Positions 1–342 (MSVETQKETL…SNDLSLNVSR (342 aa)) are a; substrate-binding. A b region spans residues 343-559 (EILQKDPVID…EQDLGLQMRQ (217 aa)). Residues 560 to 634 (ILEASGQKVP…LNKLLVELSA (75 aa)) are c.

This sequence belongs to the heat shock protein 90 family. In terms of assembly, homodimer.

Its subcellular location is the cytoplasm. Its function is as follows. Molecular chaperone. Has ATPase activity. The polypeptide is Chaperone protein HtpG (Pseudomonas paraeruginosa (strain DSM 24068 / PA7) (Pseudomonas aeruginosa (strain PA7))).